A 144-amino-acid chain; its full sequence is UPF0102 protein BURPS668_3819 (144 aa).

The interval 1–28 is disordered; it reads MCHAREASLGTGEPEAAPRDNFPREAGS. Over residues 16 to 28 the composition is skewed to basic and acidic residues; the sequence is AAPRDNFPREAGS.

The protein belongs to the UPF0102 family.

The polypeptide is UPF0102 protein BURPS668_3819 (Burkholderia pseudomallei (strain 668)).